Reading from the N-terminus, the 475-residue chain is uncharacterized protein (475 aa).

A helical membrane pass occupies residues 19–39 (LVSAILILSILIWLIITIFFA).

It localises to the membrane. This is an uncharacterized protein from Mycoplasma pneumoniae (strain ATCC 29342 / M129 / Subtype 1) (Mycoplasmoides pneumoniae).